Here is a 2481-residue protein sequence, read N- to C-terminus: Tetratricopeptide repeat protein 28 (2481 aa).

Position 1 is an N-acetylmethionine (Met-1). Pro residues predominate over residues 1 to 14 (MEQSPPPAPEPTQG). A disordered region spans residues 1–48 (MEQSPPPAPEPTQGPTPARSRRRREPESPPASAPIPLFGADTIGQRSP). Position 28 is a phosphoserine (Ser-28). 28 TPR repeats span residues 58 to 91 (FVEK…DPQN), 93 to 125 (ILYS…NPKW), 126 to 159 (PKAY…DPKS), 196 to 229 (FVVV…GTCS), 234 to 267 (GSVF…AKTL), 274 to 307 (CRAH…AMKL), 314 to 347 (SSAL…AKQS), 354 to 387 (AREL…AKDL), 394 to 427 (ARAY…AQEL), 434 to 467 (MRAY…AEDL), 474 to 507 (GRAS…AQEL), 514 to 547 (GRAY…SMEV), 554 to 587 (ASTH…AREL), 594 to 627 (ARAL…APDL), 634 to 667 (GKVC…AKDL), 674 to 707 (AKAY…AQSL), 714 to 747 (FRAL…AHQV), 754 to 787 (ASAY…YQEL), 794 to 827 (CRAH…GQKL), 834 to 867 (AQVY…LQQL), 877 to 910 (GRAY…AQSL), 917 to 950 (AKAY…AHEL), 957 to 990 (AQAY…ARDM), 997 to 1030 (SDAA…AEET), 1037 to 1070 (GRAY…AAQM), 1077 to 1110 (TVSY…AEQL), 1117 to 1150 (AKIR…FETI), and 1169 to 1202 (TSSY…AFAD). Ser-1590 is modified (phosphoserine). 3 disordered regions span residues 2004-2055 (FVSK…DEEE), 2075-2161 (NTCF…DPQE), and 2176-2339 (AVER…PADA). Composition is skewed to polar residues over residues 2029–2043 (AYLQ…QLPP) and 2096–2122 (SVSS…NSPF). Ser-2104 is modified (phosphoserine). Over residues 2130 to 2146 (SSDTGESDQSSTETDST) the composition is skewed to low complexity. Basic and acidic residues predominate over residues 2149 to 2159 (SQEESNPKLDP). A compositionally biased stretch (polar residues) spans 2183 to 2214 (SGGQVSKSNNPEDGVQAPSSTAVFRASETSAF). A phosphoserine mark is found at Ser-2224 and Ser-2251. A compositionally biased stretch (polar residues) spans 2238–2282 (RSSSLPKVSSGYSSPTTSEMSIKDSPSQHSGRPSPGCDSQTSQLD). A compositionally biased stretch (low complexity) spans 2307–2339 (SPSSGHQSPAGSAPSPALSYSSAGSARSSPADA). Ser-2393 and Ser-2398 each carry phosphoserine. The interval 2420–2467 (QHDGAPPKAPPNGHWRTETTSLGSLPLPAGPPATAPARPLRLPSGNGY) is disordered.

As to quaternary structure, interacts with AURKB. As to expression, widely expressed in fetal tissues. In adult tissues, expressed in testis and ovary and, at much lower levels, in kidney and pancreas.

The protein localises to the cytoplasm. It localises to the cytoskeleton. The protein resides in the microtubule organizing center. It is found in the centrosome. Its subcellular location is the spindle. The protein localises to the spindle pole. It localises to the midbody. Functionally, during mitosis, may be involved in the condensation of spindle midzone microtubules, leading to the formation of midbody. The chain is Tetratricopeptide repeat protein 28 (TTC28) from Homo sapiens (Human).